A 187-amino-acid chain; its full sequence is Anterior gradient protein 1 (187 aa).

The signal sequence occupies residues 1–20 (MQTGLSLVCLVLLCSALGEA).

This sequence belongs to the AGR family.

It is found in the secreted. Probably involved in cement gland formation. This chain is Anterior gradient protein 1 (ag1), found in Xenopus tropicalis (Western clawed frog).